Here is a 452-residue protein sequence, read N- to C-terminus: Cysteine--tRNA ligase (452 aa).

Residue Cys-27 coordinates Zn(2+). A 'HIGH' region motif is present at residues 29-39; it reads PTVQDHFHIGH. Asp-207, His-232, and Glu-236 together coordinate Zn(2+). The 'KMSKS' region signature appears at 265–269; sequence KMSKS. Lys-268 lines the ATP pocket.

It belongs to the class-I aminoacyl-tRNA synthetase family. Zn(2+) serves as cofactor.

Its subcellular location is the cytoplasm. The enzyme catalyses tRNA(Cys) + L-cysteine + ATP = L-cysteinyl-tRNA(Cys) + AMP + diphosphate. This is Cysteine--tRNA ligase from Thermoplasma acidophilum (strain ATCC 25905 / DSM 1728 / JCM 9062 / NBRC 15155 / AMRC-C165).